The following is a 372-amino-acid chain: MDKLRVLYDEFVTISKDNLERETGLSASDVDMDFDLNIFMTLVPVLEKKVCVITPTIEDDKIVTMMKYCSYQSFSFWFLKSGAVVKSVYNKLDDVEKEKFVATFRDMLLNVQTLISLNSMYTRLRQDTEDIVSDSKKIIEIVSHLRASTTENAAYQVLQQNNSFIISTLNKILSDENYLLKIIAVFDSKLISEKETLNEYKQLYTISSESLVYGIRCVSNLDISSVQLSNNKYVLFVKKMLPKIILFQNNDINAQQFANVISKIYTLIYRQLTSNVDVGCLLTDTIESTKTKISIEKIKQTGINNVQSLIKFISDNKKEYKTIISEEYLSKEDRIITILQNIVNEHDIKYDNKLLNMRDLIVTFRERYSYKF.

This sequence belongs to the orthopoxvirus OPG132 family.

It localises to the host cytoplasm. The protein localises to the virion. Functionally, lipid-bound viral membrane assembly protein that plays an essential role in immature virion (IV) to mature virion (MV) transition. Functions in both crescent-shaped viral membranes formation and its enclosure to form immature virions. In addition, participates in targeting mature virion proteins to sites of virion assembly to ensure their correct localization. The chain is Virion morphogenesis protein OPG132 (OPG132) from Monkeypox virus.